A 222-amino-acid chain; its full sequence is Charged multivesicular body protein 2a (222 aa).

Residue Met1 is modified to N-acetylmethionine. The stretch at 12–53 forms a coiled coil; sequence EELLRQNQRALNRAMRELDRERQKLETQEKKIIADIKKMAKQ. The tract at residues 56–222 is interaction with VPS4B; it reads MDAVRIMAKD…EERLKNLRRD (167 aa). The span at 179–188 shows a compositional bias: polar residues; sequence LSNLPSTGGS. The interval 179-198 is disordered; the sequence is LSNLPSTGGSLSVAAGGKKA. Ser184 carries the post-translational modification Phosphoserine. Thr185 is subject to Phosphothreonine. A phosphoserine mark is found at Ser188, Ser190, and Ser203. The stretch at 195–222 forms a coiled coil; the sequence is GKKAEATASALADADADLEERLKNLRRD. An MIT-interacting motif motif is present at residues 210–220; that stretch reads ADLEERLKNLR. Positions 217-222 are interaction with VTA1; it reads KNLRRD.

Belongs to the SNF7 family. Probable core component of the endosomal sorting required for transport complex III (ESCRT-III). ESCRT-III components are thought to multimerize to form a flat lattice on the perimeter membrane of the endosome. Several assembly forms of ESCRT-III may exist that interact and act sequentially. In vitro, heteromerizes with CHMP3 (but not CHMP4) to form helical tubular structures that expose membrane-interacting sites on the outside whereas VPS4B can associate on the inside of the tubule. Interacts with CHMP1B, CHMP2B, CHMP3, CHMP4A, CHMP4B, CHMP4C and CHMP5. Interacts with VPS4A; the interaction is direct. Interacts with VPS4B; the interaction is direct. Interacts with MITD1. Interacts with VTA1; the interaction probably involves the open conformation of CHMP2A. ISGylated in a CHMP5-dependent manner. Isgylation weakens and inhibits its interactions with VPS4A and VTA1 respectively. As to expression, widely expressed. Highly expressed in brain, heart, liver and kidney.

Its subcellular location is the late endosome membrane. It is found in the cytoplasm. It localises to the nucleus envelope. Probable core component of the endosomal sorting required for transport complex III (ESCRT-III) which is involved in multivesicular bodies (MVBs) formation and sorting of endosomal cargo proteins into MVBs. MVBs contain intraluminal vesicles (ILVs) that are generated by invagination and scission from the limiting membrane of the endosome and mostly are delivered to lysosomes enabling degradation of membrane proteins, such as stimulated growth factor receptors, lysosomal enzymes and lipids. The MVB pathway appears to require the sequential function of ESCRT-O, -I,-II and -III complexes. ESCRT-III proteins mostly dissociate from the invaginating membrane before the ILV is released. The ESCRT machinery also functions in topologically equivalent membrane fission events, such as the terminal stages of cytokinesis. Together with SPAST, the ESCRT-III complex promotes nuclear envelope sealing and mitotic spindle disassembly during late anaphase. Recruited to the reforming nuclear envelope (NE) during anaphase by LEMD2. ESCRT-III proteins are believed to mediate the necessary vesicle extrusion and/or membrane fission activities, possibly in conjunction with the AAA ATPase VPS4. This chain is Charged multivesicular body protein 2a (Chmp2a), found in Mus musculus (Mouse).